The primary structure comprises 488 residues: Ribulose bisphosphate carboxylase large chain (488 aa).

Asn127 and Thr177 together coordinate substrate. Lys179 functions as the Proton acceptor in the catalytic mechanism. A substrate-binding site is contributed by Lys181. Residues Lys205, Asp207, and Glu208 each coordinate Mg(2+). Position 205 is an N6-carboxylysine (Lys205). His297 serves as the catalytic Proton acceptor. Substrate is bound by residues Arg298, His330, and Ser382.

It belongs to the RuBisCO large chain family. Type I subfamily. In terms of assembly, heterohexadecamer of 8 large chains and 8 small chains. The cofactor is Mg(2+).

The protein localises to the plastid. Its subcellular location is the chloroplast. It carries out the reaction 2 (2R)-3-phosphoglycerate + 2 H(+) = D-ribulose 1,5-bisphosphate + CO2 + H2O. It catalyses the reaction D-ribulose 1,5-bisphosphate + O2 = 2-phosphoglycolate + (2R)-3-phosphoglycerate + 2 H(+). RuBisCO catalyzes two reactions: the carboxylation of D-ribulose 1,5-bisphosphate, the primary event in carbon dioxide fixation, as well as the oxidative fragmentation of the pentose substrate in the photorespiration process. Both reactions occur simultaneously and in competition at the same active site. The sequence is that of Ribulose bisphosphate carboxylase large chain from Antithamnion sp. (Red alga).